Here is a 298-residue protein sequence, read N- to C-terminus: Glutamyl-Q tRNA(Asp) synthetase (298 aa).

L-glutamate is bound by residues 9–13 and Glu45; that span reads RFAPS. Residues 12 to 22 carry the 'HIGH' region motif; the sequence is PSPSGELHFGS. The Zn(2+) site is built by Cys101, Cys103, Tyr115, and Cys119. Tyr172 and Arg190 together coordinate L-glutamate. The 'KMSKS' region motif lies at 228–232; sequence KLSKQ. Lys231 serves as a coordination point for ATP.

It belongs to the class-I aminoacyl-tRNA synthetase family. GluQ subfamily. Requires Zn(2+) as cofactor.

Functionally, catalyzes the tRNA-independent activation of glutamate in presence of ATP and the subsequent transfer of glutamate onto a tRNA(Asp). Glutamate is transferred on the 2-amino-5-(4,5-dihydroxy-2-cyclopenten-1-yl) moiety of the queuosine in the wobble position of the QUC anticodon. This Salmonella choleraesuis (strain SC-B67) protein is Glutamyl-Q tRNA(Asp) synthetase.